Reading from the N-terminus, the 126-residue chain is Aspartate 1-decarboxylase (126 aa).

Catalysis depends on Ser-25, which acts as the Schiff-base intermediate with substrate; via pyruvic acid. Ser-25 carries the pyruvic acid (Ser) modification. Residue Thr-57 participates in substrate binding. Tyr-58 functions as the Proton donor in the catalytic mechanism. Residue Gly-73–Ala-75 participates in substrate binding.

This sequence belongs to the PanD family. Heterooctamer of four alpha and four beta subunits. It depends on pyruvate as a cofactor. Is synthesized initially as an inactive proenzyme, which is activated by self-cleavage at a specific serine bond to produce a beta-subunit with a hydroxyl group at its C-terminus and an alpha-subunit with a pyruvoyl group at its N-terminus.

The protein resides in the cytoplasm. It catalyses the reaction L-aspartate + H(+) = beta-alanine + CO2. Its pathway is cofactor biosynthesis; (R)-pantothenate biosynthesis; beta-alanine from L-aspartate: step 1/1. Its function is as follows. Catalyzes the pyruvoyl-dependent decarboxylation of aspartate to produce beta-alanine. In Xylella fastidiosa (strain M12), this protein is Aspartate 1-decarboxylase.